A 92-amino-acid chain; its full sequence is Small ribosomal subunit protein bS20 (92 aa).

The tract at residues 1 to 23 is disordered; the sequence is MANSPSAKKRAKQAEKRRSHNAS. The span at 7-20 shows a compositional bias: basic residues; that stretch reads AKKRAKQAEKRRSH.

The protein belongs to the bacterial ribosomal protein bS20 family.

Binds directly to 16S ribosomal RNA. The sequence is that of Small ribosomal subunit protein bS20 from Pseudomonas fluorescens (strain ATCC BAA-477 / NRRL B-23932 / Pf-5).